Consider the following 208-residue polypeptide: MIGMLTGRVESVETDTALIDVGGVGYEVRMSATDLSRLHAGQDTRVFTYMNLSQDAITLHGFLDRDAKKTFLQLIKVSGIGPKVAQSLLSTLTPSQLAHAIADNDATALAKAPGLGKKGAQKIILELKGSIDLSQIEGASAQAATSKSPVDTGTEQVVEGLISLGWRQQDAQQAVAEACAENDIPTPLATDDVPRVLRLALALMDRGR.

Residues 1–63 are domain I; it reads MIGMLTGRVE…QDAITLHGFL (63 aa). A domain II region spans residues 64–142; the sequence is DRDAKKTFLQ…LSQIEGASAQ (79 aa). The segment at 143–151 is flexible linker; that stretch reads AATSKSPVD. The domain III stretch occupies residues 151-208; the sequence is DTGTEQVVEGLISLGWRQQDAQQAVAEACAENDIPTPLATDDVPRVLRLALALMDRGR.

It belongs to the RuvA family. In terms of assembly, homotetramer. Forms an RuvA(8)-RuvB(12)-Holliday junction (HJ) complex. HJ DNA is sandwiched between 2 RuvA tetramers; dsDNA enters through RuvA and exits via RuvB. An RuvB hexamer assembles on each DNA strand where it exits the tetramer. Each RuvB hexamer is contacted by two RuvA subunits (via domain III) on 2 adjacent RuvB subunits; this complex drives branch migration. In the full resolvosome a probable DNA-RuvA(4)-RuvB(12)-RuvC(2) complex forms which resolves the HJ.

It is found in the cytoplasm. Its function is as follows. The RuvA-RuvB-RuvC complex processes Holliday junction (HJ) DNA during genetic recombination and DNA repair, while the RuvA-RuvB complex plays an important role in the rescue of blocked DNA replication forks via replication fork reversal (RFR). RuvA specifically binds to HJ cruciform DNA, conferring on it an open structure. The RuvB hexamer acts as an ATP-dependent pump, pulling dsDNA into and through the RuvAB complex. HJ branch migration allows RuvC to scan DNA until it finds its consensus sequence, where it cleaves and resolves the cruciform DNA. In Bifidobacterium longum (strain DJO10A), this protein is Holliday junction branch migration complex subunit RuvA.